The chain runs to 66 residues: Antimicrobial peptide Eval967 (66 aa).

A signal peptide spans 1–22 (MKFSALLPVFFLLLAVIDYCQA). Position 36 is a leucine amide (Leu36). A propeptide spanning residues 37-66 (GKRDVKTQKYVDIKRRDLDLDDMLSKLFED) is cleaved from the precursor.

This sequence belongs to the non-disulfide-bridged peptide (NDBP) superfamily. Short antimicrobial peptide (group 4) family. Expressed by the venom gland.

It is found in the secreted. Functionally, probable antimicrobial peptide. Has no inhibitory activity against herpes simplex virus type 1 (HSV-1). The protein is Antimicrobial peptide Eval967 of Euscorpiops validus (Scorpion).